Consider the following 411-residue polypeptide: Arginine deiminase (411 aa).

Cysteine 401 functions as the Amidino-cysteine intermediate in the catalytic mechanism.

Belongs to the arginine deiminase family.

It is found in the cytoplasm. It catalyses the reaction L-arginine + H2O = L-citrulline + NH4(+). Its pathway is amino-acid degradation; L-arginine degradation via ADI pathway; carbamoyl phosphate from L-arginine: step 1/2. The chain is Arginine deiminase from Staphylococcus aureus (strain bovine RF122 / ET3-1).